We begin with the raw amino-acid sequence, 73 residues long: Large ribosomal subunit protein bL31 (73 aa).

Residues Cys-16, Cys-18, Cys-38, and Cys-41 each coordinate Zn(2+).

The protein belongs to the bacterial ribosomal protein bL31 family. Type A subfamily. In terms of assembly, part of the 50S ribosomal subunit. Zn(2+) is required as a cofactor.

Functionally, binds the 23S rRNA. In Vibrio parahaemolyticus serotype O3:K6 (strain RIMD 2210633), this protein is Large ribosomal subunit protein bL31.